The chain runs to 463 residues: Exodeoxyribonuclease 7 large subunit (463 aa).

It belongs to the XseA family. Heterooligomer composed of large and small subunits.

The protein localises to the cytoplasm. It catalyses the reaction Exonucleolytic cleavage in either 5'- to 3'- or 3'- to 5'-direction to yield nucleoside 5'-phosphates.. Its function is as follows. Bidirectionally degrades single-stranded DNA into large acid-insoluble oligonucleotides, which are then degraded further into small acid-soluble oligonucleotides. In Bordetella bronchiseptica (strain ATCC BAA-588 / NCTC 13252 / RB50) (Alcaligenes bronchisepticus), this protein is Exodeoxyribonuclease 7 large subunit.